Reading from the N-terminus, the 360-residue chain is Photosystem II protein D1 (360 aa).

Helical transmembrane passes span 29-46 (YIGW…TATS), 118-133 (HFFI…EWEL), and 142-156 (WIAV…AATA). His118 contacts chlorophyll a. Tyr126 lines the pheophytin a pocket. 2 residues coordinate [CaMn4O5] cluster: Asp170 and Glu189. Residues 197–218 (FHMMGVAGVFGGSLFSAMHGSL) traverse the membrane as a helical segment. His198 serves as a coordination point for chlorophyll a. A quinone-binding positions include His215 and 264–265 (SF). His215 provides a ligand contact to Fe cation. His272 serves as a coordination point for Fe cation. The helical transmembrane segment at 274–288 (FLALWPVVCICVTAL) threads the bilayer. The [CaMn4O5] cluster site is built by His332, Glu333, Asp342, and Ala344. A propeptide spanning residues 345 to 360 (SEVSLPVALNKVEING) is cleaved from the precursor.

This sequence belongs to the reaction center PufL/M/PsbA/D family. In terms of assembly, PSII is composed of 1 copy each of membrane proteins PsbA, PsbB, PsbC, PsbD, PsbE, PsbF, PsbH, PsbI, PsbJ, PsbK, PsbL, PsbM, PsbT, PsbY, PsbZ, Psb30/Ycf12, at least 3 peripheral proteins of the oxygen-evolving complex and a large number of cofactors. It forms dimeric complexes. It depends on The D1/D2 heterodimer binds P680, chlorophylls that are the primary electron donor of PSII, and subsequent electron acceptors. It shares a non-heme iron and each subunit binds pheophytin, quinone, additional chlorophylls, carotenoids and lipids. D1 provides most of the ligands for the Mn4-Ca-O5 cluster of the oxygen-evolving complex (OEC). There is also a Cl(-1) ion associated with D1 and D2, which is required for oxygen evolution. The PSII complex binds additional chlorophylls, carotenoids and specific lipids. as a cofactor. In terms of processing, tyr-161 forms a radical intermediate that is referred to as redox-active TyrZ, YZ or Y-Z. Post-translationally, C-terminally processed by CTPA; processing is essential to allow assembly of the oxygen-evolving complex and thus photosynthetic growth.

It localises to the plastid. The protein resides in the chloroplast thylakoid membrane. It carries out the reaction 2 a plastoquinone + 4 hnu + 2 H2O = 2 a plastoquinol + O2. Functionally, photosystem II (PSII) is a light-driven water:plastoquinone oxidoreductase that uses light energy to abstract electrons from H(2)O, generating O(2) and a proton gradient subsequently used for ATP formation. It consists of a core antenna complex that captures photons, and an electron transfer chain that converts photonic excitation into a charge separation. The D1/D2 (PsbA/PsbD) reaction center heterodimer binds P680, the primary electron donor of PSII as well as several subsequent electron acceptors. This chain is Photosystem II protein D1, found in Galdieria sulphuraria (Red alga).